The following is a 304-amino-acid chain: Acetyl-coenzyme A carboxylase carboxyl transferase subunit beta (304 aa).

Positions 23–292 (VWTKCDSCGQ…PNPEAPREGV (270 aa)) constitute a CoA carboxyltransferase N-terminal domain. Residues Cys-27, Cys-30, Cys-46, and Cys-49 each coordinate Zn(2+). The C4-type zinc-finger motif lies at 27 to 49 (CDSCGQVLYRAELERNLEVCPKC). Residues 284–304 (NPEAPREGVVVPPVPDQEPEA) are disordered. Positions 295 to 304 (PPVPDQEPEA) are enriched in pro residues.

The protein belongs to the AccD/PCCB family. In terms of assembly, acetyl-CoA carboxylase is a heterohexamer composed of biotin carboxyl carrier protein (AccB), biotin carboxylase (AccC) and two subunits each of ACCase subunit alpha (AccA) and ACCase subunit beta (AccD). Zn(2+) is required as a cofactor.

It is found in the cytoplasm. It carries out the reaction N(6)-carboxybiotinyl-L-lysyl-[protein] + acetyl-CoA = N(6)-biotinyl-L-lysyl-[protein] + malonyl-CoA. It functions in the pathway lipid metabolism; malonyl-CoA biosynthesis; malonyl-CoA from acetyl-CoA: step 1/1. Component of the acetyl coenzyme A carboxylase (ACC) complex. Biotin carboxylase (BC) catalyzes the carboxylation of biotin on its carrier protein (BCCP) and then the CO(2) group is transferred by the transcarboxylase to acetyl-CoA to form malonyl-CoA. The chain is Acetyl-coenzyme A carboxylase carboxyl transferase subunit beta from Escherichia coli O6:K15:H31 (strain 536 / UPEC).